We begin with the raw amino-acid sequence, 140 residues long: MGYESMLADIKSSLNGKISDVEDKIEKLKKAKKDIDTLQEEAITEIKEIVKPELGKHWTGTKADDFDKGREEAKSEASKIVNDKYNEYMASINGKIFDLEWDKAKYASELFIANGAADLLKKGEEFAEEVGNTISKLKWW.

The stretch at 6 to 51 (MLADIKSSLNGKISDVEDKIEKLKKAKKDIDTLQEEAITEIKEIVK) forms a coiled coil.

In Bacillus subtilis (strain 168), this protein is Protein YwqH (ywqH).